A 139-amino-acid polypeptide reads, in one-letter code: Large-conductance mechanosensitive channel (139 aa).

3 helical membrane-spanning segments follow: residues 19-39 (VGVI…ADII), 40-60 (MPIV…LPLS), and 81-101 (GNFL…FMVI).

This sequence belongs to the MscL family. Homopentamer.

It is found in the cell inner membrane. Functionally, channel that opens in response to stretch forces in the membrane lipid bilayer. May participate in the regulation of osmotic pressure changes within the cell. This is Large-conductance mechanosensitive channel from Nitrobacter winogradskyi (strain ATCC 25391 / DSM 10237 / CIP 104748 / NCIMB 11846 / Nb-255).